The chain runs to 130 residues: Small ribosomal subunit protein uS9 (130 aa).

The tract at residues 105–130 (TRDSRMKERKKPGLKGARRAPQFSKR) is disordered. Over residues 111-130 (KERKKPGLKGARRAPQFSKR) the composition is skewed to basic residues.

The protein belongs to the universal ribosomal protein uS9 family.

The chain is Small ribosomal subunit protein uS9 from Listeria welshimeri serovar 6b (strain ATCC 35897 / DSM 20650 / CCUG 15529 / CIP 8149 / NCTC 11857 / SLCC 5334 / V8).